The following is a 363-amino-acid chain: Fructose-bisphosphate aldolase (363 aa).

Substrate contacts are provided by arginine 56 and lysine 147. Catalysis depends on glutamate 188, which acts as the Proton acceptor. The active-site Schiff-base intermediate with dihydroxyacetone-P is the lysine 230.

It belongs to the class I fructose-bisphosphate aldolase family.

The enzyme catalyses beta-D-fructose 1,6-bisphosphate = D-glyceraldehyde 3-phosphate + dihydroxyacetone phosphate. Its pathway is carbohydrate degradation; glycolysis; D-glyceraldehyde 3-phosphate and glycerone phosphate from D-glucose: step 4/4. The protein is Fructose-bisphosphate aldolase (FBPA) of Echinococcus multilocularis (Fox tapeworm).